A 131-amino-acid chain; its full sequence is Large ribosomal subunit protein uL24 (131 aa).

This sequence belongs to the universal ribosomal protein uL24 family. In terms of assembly, part of the 50S ribosomal subunit.

One of two assembly initiator proteins, it binds directly to the 5'-end of the 23S rRNA, where it nucleates assembly of the 50S subunit. In terms of biological role, located at the polypeptide exit tunnel on the outside of the subunit. The chain is Large ribosomal subunit protein uL24 from Korarchaeum cryptofilum (strain OPF8).